The primary structure comprises 390 residues: 1-deoxy-D-xylulose 5-phosphate reductoisomerase (390 aa).

Residues threonine 10, glycine 11, serine 12, valine 13, and asparagine 124 each contribute to the NADPH site. Residue lysine 125 coordinates 1-deoxy-D-xylulose 5-phosphate. Glutamate 126 serves as a coordination point for NADPH. Residue aspartate 150 coordinates Mn(2+). Serine 151, glutamate 152, serine 181, and histidine 204 together coordinate 1-deoxy-D-xylulose 5-phosphate. Residue glutamate 152 participates in Mn(2+) binding. Glycine 210 is an NADPH binding site. 1-deoxy-D-xylulose 5-phosphate-binding residues include serine 217, asparagine 222, lysine 223, and glutamate 226. Glutamate 226 serves as a coordination point for Mn(2+).

The protein belongs to the DXR family. Mg(2+) serves as cofactor. It depends on Mn(2+) as a cofactor.

The catalysed reaction is 2-C-methyl-D-erythritol 4-phosphate + NADP(+) = 1-deoxy-D-xylulose 5-phosphate + NADPH + H(+). It functions in the pathway isoprenoid biosynthesis; isopentenyl diphosphate biosynthesis via DXP pathway; isopentenyl diphosphate from 1-deoxy-D-xylulose 5-phosphate: step 1/6. In terms of biological role, catalyzes the NADPH-dependent rearrangement and reduction of 1-deoxy-D-xylulose-5-phosphate (DXP) to 2-C-methyl-D-erythritol 4-phosphate (MEP). In Janthinobacterium sp. (strain Marseille) (Minibacterium massiliensis), this protein is 1-deoxy-D-xylulose 5-phosphate reductoisomerase.